The chain runs to 147 residues: Deoxyuridine 5'-triphosphate nucleotidohydrolase (147 aa).

Substrate contacts are provided by residues Arg67–Gly69, Asn80, and Thr84–Asp86.

Belongs to the dUTPase family. Requires Mg(2+) as cofactor.

It carries out the reaction dUTP + H2O = dUMP + diphosphate + H(+). It participates in pyrimidine metabolism; dUMP biosynthesis; dUMP from dCTP (dUTP route): step 2/2. Its function is as follows. This enzyme is involved in nucleotide metabolism: it produces dUMP, the immediate precursor of thymidine nucleotides and it decreases the intracellular concentration of dUTP so that uracil cannot be incorporated into DNA. This is Deoxyuridine 5'-triphosphate nucleotidohydrolase from Syntrophotalea carbinolica (strain DSM 2380 / NBRC 103641 / GraBd1) (Pelobacter carbinolicus).